The following is a 203-amino-acid chain: Ras-like protein 1 (203 aa).

A GTP-binding site is contributed by 17-24 (GGGGVGKS). An Effector region motif is present at residues 39–47 (YDPTIEDSY). GTP-binding positions include 64–68 (DTAGQ) and 123–126 (NKCD). At Cys-200 the chain carries Cysteine methyl ester. Cys-200 is lipidated: S-farnesyl cysteine. Positions 201–203 (ILM) are cleaved as a propeptide — removed in mature form.

It belongs to the small GTPase superfamily. Ras family.

The protein resides in the cell membrane. It catalyses the reaction GTP + H2O = GDP + phosphate + H(+). Alternates between an inactive form bound to GDP and an active form bound to GTP. Activated by a guanine nucleotide-exchange factor (GEF) and inactivated by a GTPase-activating protein (GAP). The chain is Ras-like protein 1 (RAS1) from Mucor circinelloides f. lusitanicus (Mucor racemosus var. lusitanicus).